A 247-amino-acid polypeptide reads, in one-letter code: Ribonuclease 3 (247 aa).

An RNase III domain is found at 21 to 149 (VDHQPLLDHL…LFGAIFRQHG (129 aa)). Residue glutamate 62 coordinates Mg(2+). The active site involves aspartate 66. The Mg(2+) site is built by aspartate 135 and glutamate 138. Glutamate 138 is an active-site residue. The DRBM domain maps to 176-244 (DWKTTLQEEL…AHQAFRKLRE (69 aa)).

It belongs to the ribonuclease III family. In terms of assembly, homodimer. Mg(2+) serves as cofactor.

It is found in the cytoplasm. The catalysed reaction is Endonucleolytic cleavage to 5'-phosphomonoester.. Functionally, digests double-stranded RNA. Involved in the processing of primary rRNA transcript to yield the immediate precursors to the large and small rRNAs (23S and 16S). Processes some mRNAs, and tRNAs when they are encoded in the rRNA operon. Processes pre-crRNA and tracrRNA of type II CRISPR loci if present in the organism. In Corynebacterium glutamicum (strain ATCC 13032 / DSM 20300 / JCM 1318 / BCRC 11384 / CCUG 27702 / LMG 3730 / NBRC 12168 / NCIMB 10025 / NRRL B-2784 / 534), this protein is Ribonuclease 3.